We begin with the raw amino-acid sequence, 276 residues long: Tryptophan synthase alpha chain (276 aa).

Active-site proton acceptor residues include Glu-49 and Asp-60.

It belongs to the TrpA family. Tetramer of two alpha and two beta chains.

The catalysed reaction is (1S,2R)-1-C-(indol-3-yl)glycerol 3-phosphate + L-serine = D-glyceraldehyde 3-phosphate + L-tryptophan + H2O. It functions in the pathway amino-acid biosynthesis; L-tryptophan biosynthesis; L-tryptophan from chorismate: step 5/5. Its function is as follows. The alpha subunit is responsible for the aldol cleavage of indoleglycerol phosphate to indole and glyceraldehyde 3-phosphate. The polypeptide is Tryptophan synthase alpha chain (Acidiphilium cryptum (strain JF-5)).